A 355-amino-acid polypeptide reads, in one-letter code: Aminopeptidase N (355 aa).

Substrate is bound by residues E156 and 290-294 (GAMEN). H326 is a Zn(2+) binding site. The Proton acceptor role is filled by E327. H330 and E349 together coordinate Zn(2+). E349 is a substrate binding site.

This sequence belongs to the peptidase M1 family. It depends on Zn(2+) as a cofactor.

It localises to the cytoplasm. The enzyme catalyses Release of an N-terminal amino acid, Xaa-|-Yaa- from a peptide, amide or arylamide. Xaa is preferably Ala, but may be most amino acids including Pro (slow action). When a terminal hydrophobic residue is followed by a prolyl residue, the two may be released as an intact Xaa-Pro dipeptide.. Aminopeptidase N is involved in the degradation of intracellular peptides generated by protein breakdown during normal growth as well as in response to nutrient starvation. The polypeptide is Aminopeptidase N (pepN) (Acetobacter pasteurianus (Acetobacter turbidans)).